A 202-amino-acid chain; its full sequence is Glycerol-3-phosphate acyltransferase (202 aa).

5 helical membrane-spanning segments follow: residues 3–23 (NLII…LILA), 87–107 (LLWS…YLLF), 118–138 (GAMI…WVVI), 144–164 (ISSL…FIFN), and 167–187 (LEIH…YKHL).

It belongs to the PlsY family. In terms of assembly, probably interacts with PlsX.

The protein resides in the cell inner membrane. The enzyme catalyses an acyl phosphate + sn-glycerol 3-phosphate = a 1-acyl-sn-glycero-3-phosphate + phosphate. Its pathway is lipid metabolism; phospholipid metabolism. In terms of biological role, catalyzes the transfer of an acyl group from acyl-phosphate (acyl-PO(4)) to glycerol-3-phosphate (G3P) to form lysophosphatidic acid (LPA). This enzyme utilizes acyl-phosphate as fatty acyl donor, but not acyl-CoA or acyl-ACP. This is Glycerol-3-phosphate acyltransferase from Campylobacter jejuni subsp. jejuni serotype O:2 (strain ATCC 700819 / NCTC 11168).